We begin with the raw amino-acid sequence, 328 residues long: Phosphate acyltransferase (328 aa).

The protein belongs to the PlsX family. Homodimer. Probably interacts with PlsY.

It localises to the cytoplasm. The enzyme catalyses a fatty acyl-[ACP] + phosphate = an acyl phosphate + holo-[ACP]. It participates in lipid metabolism; phospholipid metabolism. Functionally, catalyzes the reversible formation of acyl-phosphate (acyl-PO(4)) from acyl-[acyl-carrier-protein] (acyl-ACP). This enzyme utilizes acyl-ACP as fatty acyl donor, but not acyl-CoA. This is Phosphate acyltransferase from Mycoplasmoides gallisepticum (strain R(low / passage 15 / clone 2)) (Mycoplasma gallisepticum).